A 278-amino-acid chain; its full sequence is 4-deoxy-L-threo-5-hexosulose-uronate ketol-isomerase (278 aa).

Zn(2+) is bound by residues H196, H198, E203, and H245.

It belongs to the KduI family. As to quaternary structure, homohexamer. Zn(2+) is required as a cofactor.

The enzyme catalyses 5-dehydro-4-deoxy-D-glucuronate = 3-deoxy-D-glycero-2,5-hexodiulosonate. It participates in glycan metabolism; pectin degradation; 2-dehydro-3-deoxy-D-gluconate from pectin: step 4/5. Its function is as follows. Catalyzes the isomerization of 5-dehydro-4-deoxy-D-glucuronate to 3-deoxy-D-glycero-2,5-hexodiulosonate. The sequence is that of 4-deoxy-L-threo-5-hexosulose-uronate ketol-isomerase from Escherichia coli O139:H28 (strain E24377A / ETEC).